Here is a 185-residue protein sequence, read N- to C-terminus: Intraflagellar transport protein 22 homolog (185 aa).

Residues 10 to 17 (GPCESGKT), 63 to 67 (DCGGD), and 123 to 126 (HKPG) each bind GTP. A Phosphoserine modification is found at Ser-137.

This sequence belongs to the small GTPase superfamily. Rab family. In terms of assembly, component of the IFT complex B, at least composed of IFT20, IFT22, IFT25, IFT27, IFT46, IFT52, TRAF3IP1/IFT54, IFT57, IFT74, IFT80, IFT81, and IFT88. Interacts with IFT88. Interacts with CFAP61.

Its subcellular location is the cell projection. It localises to the cilium. Functionally, small GTPase-like component of the intraflagellar transport (IFT) complex B. This is Intraflagellar transport protein 22 homolog (IFT22) from Macaca fascicularis (Crab-eating macaque).